We begin with the raw amino-acid sequence, 127 residues long: Class I hydrophobin 1 (127 aa).

The first 20 residues, 1-20, serve as a signal peptide directing secretion; the sequence is MLSLLSKAVSLAILVTAVVA. 4 disulfide bridges follow: Cys-53/Cys-108, Cys-60/Cys-102, Cys-61/Cys-94, and Cys-109/Cys-122. Asn-66 carries N-linked (GlcNAc...) asparagine glycosylation.

The protein belongs to the fungal hydrophobin family. In terms of assembly, self-assembles to form functional amyloid fibrils called rodlets. Self-assembly into fibrillar rodlets occurs spontaneously at hydrophobic:hydrophilic interfaces and the rodlets further associate laterally to form amphipathic monolayers. As to expression, expressed everywhere in the mycelial tissues of developing fruiting bodies except for the top parts of the pileus (cap) and for the prehymenophore; but high level of the transcript is detected in the parts surrounding the prehymenophore.

The protein localises to the secreted. It is found in the cell wall. In terms of biological role, aerial growth, conidiation, and dispersal of filamentous fungi in the environment rely upon a capability of their secreting small amphipathic proteins called hydrophobins (HPBs) with low sequence identity. Class I can self-assemble into an outermost layer of rodlet bundles on aerial cell surfaces, conferring cellular hydrophobicity that supports fungal growth, development and dispersal; whereas Class II form highly ordered films at water-air interfaces through intermolecular interactions but contribute nothing to the rodlet structure. Hyd1 is a class I hydrophobin that plays a role in fruiting body initiation rather than in mature fruit body maintenance. Seems to be involved in the formation in the extracellular matrix of lined air channels with a hydrophobic membrane. These channels may help to provide gas exchange during respiration in mycelial tissues of developing fruiting bodies and are formed all over the mycelial tissues of these developing fruiting bodies except for the top parts of the pileus (cap) and for the prehymenophore. The sequence is that of Class I hydrophobin 1 from Lentinula edodes (Shiitake mushroom).